The following is a 296-amino-acid chain: Undecaprenyl-diphosphatase (296 aa).

A run of 7 helical transmembrane segments spans residues 48 to 68 (SAFT…AWVF), 104 to 124 (LTLW…LLFD), 131 to 151 (LFSV…MIFA), 167 to 187 (ITFF…WPGF), 208 to 228 (SDFT…LSLV), 237 to 257 (SHIP…LLSI), and 272 to 292 (FAIY…GFGI).

It belongs to the UppP family.

It localises to the cell membrane. The catalysed reaction is di-trans,octa-cis-undecaprenyl diphosphate + H2O = di-trans,octa-cis-undecaprenyl phosphate + phosphate + H(+). In terms of biological role, catalyzes the dephosphorylation of undecaprenyl diphosphate (UPP). Confers resistance to bacitracin. This is Undecaprenyl-diphosphatase from Staphylococcus carnosus (strain TM300).